A 596-amino-acid polypeptide reads, in one-letter code: UDP-glucuronate:xylan alpha-glucuronosyltransferase 2 (596 aa).

The helical; Signal-anchor for type II membrane protein transmembrane segment at Leu-17 to Phe-37 threads the bilayer. Asp-395 and Asp-397 together coordinate Mn(2+). Residues Asp-395–Asp-397, Asn-424–Gly-426, Asn-451–Gln-455, and His-504–Lys-509 contribute to the substrate site. His-504 contacts Mn(2+).

The protein belongs to the glycosyltransferase 8 family. Glycogenin subfamily. Mn(2+) is required as a cofactor.

It localises to the golgi apparatus membrane. Glycosyltransferase required for the addition of both glucuronic acid and 4-O-methylglucuronic acid branches to xylan in stem cell walls. In association with GUX1, is responsible for almost all of the substitutions of the xylan backbone in stem glucuronoxylan. The polypeptide is UDP-glucuronate:xylan alpha-glucuronosyltransferase 2 (GUX2) (Arabidopsis thaliana (Mouse-ear cress)).